The following is a 452-amino-acid chain: UDP-N-acetylmuramate--L-alanine ligase (452 aa).

An ATP-binding site is contributed by 119–125; that stretch reads GAHGKTS.

The protein belongs to the MurCDEF family.

It localises to the cytoplasm. The catalysed reaction is UDP-N-acetyl-alpha-D-muramate + L-alanine + ATP = UDP-N-acetyl-alpha-D-muramoyl-L-alanine + ADP + phosphate + H(+). The protein operates within cell wall biogenesis; peptidoglycan biosynthesis. Functionally, cell wall formation. This is UDP-N-acetylmuramate--L-alanine ligase from Streptococcus mutans serotype c (strain ATCC 700610 / UA159).